Consider the following 533-residue polypeptide: Probable galacturonosyltransferase 13 (533 aa).

Residues 1–40 (MQLHISPSMRSITISSSNEFIDLMKIKVAARHISYRTLFH) are Cytoplasmic-facing. The chain crosses the membrane as a helical; Signal-anchor for type II membrane protein span at residues 41–61 (TILILAFLLPFVFILTAVVTL). Over 62 to 533 (EGVNKCSSFD…DFIKNCHILE (472 aa)) the chain is Lumenal. N-linked (GlcNAc...) asparagine glycosylation is found at Asn306, Asn396, Asn445, and Asn520.

It belongs to the glycosyltransferase 8 family. As to expression, expressed in roots, inflorescences, siliques, leaves and stems. Accumulates in pollen grains.

The protein resides in the golgi apparatus membrane. It functions in the pathway glycan metabolism; pectin biosynthesis. Functionally, may be involved in pectin and/or xylans biosynthesis in cell walls. Together with GAUT14, required for pollen tube growth, possibly through the regulation of pectin biosynthesis and repartition in the pollen tube wall. This chain is Probable galacturonosyltransferase 13, found in Arabidopsis thaliana (Mouse-ear cress).